The chain runs to 591 residues: Alpha-(1-&gt;6)-mannopyranosyltransferase Rv1459c (591 aa).

Transmembrane regions (helical) follow at residues 40-60 (FGAT…ARPV), 80-100 (VSLT…LMLG), 117-137 (TLLL…KDVY), 201-221 (IVAA…LIVW), 235-255 (VSAL…VAGI), 259-279 (ALML…LDMA), 321-341 (EWGP…SSQV), 367-387 (LLLA…ILGW), 408-428 (WMSP…LLGL), 441-461 (AIGV…VLRG), 473-493 (LAVT…WAII), 502-522 (PGFR…GPTA), and 527-547 (FALF…ILLI). The segment at 569–591 (ESASKTPATRRPTAAPDAYADST) is disordered. The span at 574–584 (TPATRRPTAAP) shows a compositional bias: low complexity.

It belongs to the MptA/B family.

Its subcellular location is the membrane. Catalyzes the addition of alpha-(1-&gt;6)-mannose residue. In Mycobacterium tuberculosis (strain ATCC 25618 / H37Rv), this protein is Alpha-(1-&gt;6)-mannopyranosyltransferase Rv1459c.